Here is a 141-residue protein sequence, read N- to C-terminus: Hemoglobin subunit alpha (141 aa).

The Globin domain maps to 1–141 (VLSPADKTNI…VSTVLTSKYR (141 aa)). Phosphoserine is present on S3. K7 bears the N6-succinyllysine mark. Residue T8 is modified to Phosphothreonine. Position 11 is an N6-succinyllysine (K11). K16 carries the N6-acetyllysine; alternate modification. N6-succinyllysine; alternate is present on K16. A Phosphotyrosine modification is found at Y24. The residue at position 35 (S35) is a Phosphoserine. K40 is modified (N6-succinyllysine). S49 is modified (phosphoserine). H58 is an O2 binding site. H87 lines the heme b pocket. Residue S102 is modified to Phosphoserine. A Phosphothreonine modification is found at T108. S124 carries the post-translational modification Phosphoserine. Phosphothreonine occurs at positions 134 and 137. Residue S138 is modified to Phosphoserine.

It belongs to the globin family. As to quaternary structure, heterotetramer of two alpha chains and two beta chains. In terms of tissue distribution, red blood cells.

In terms of biological role, involved in oxygen transport from the lung to the various peripheral tissues. Functionally, hemopressin acts as an antagonist peptide of the cannabinoid receptor CNR1. Hemopressin-binding efficiently blocks cannabinoid receptor CNR1 and subsequent signaling. This Vulpes vulpes (Red fox) protein is Hemoglobin subunit alpha (HBA).